The primary structure comprises 831 residues: MTLTRRDLIKAQAAATAAAAAGLPVSALAQPVTGGAEALRIRWSKAPCRFCGTGCGVMVGTRDGQVVATHGDTQAEVNRGLNCVKGYFLSKIMYGEDRLTTPLLRMKDGVYHKEGEFAPVSWDEAFDVMAAQAKRVLKEKGPKAVGMFGSGQWTIWEGYAASKLMRAGFRSNNLDPNARHCMASAATAFMRTFGMDEPMGCYDDFEAADAFVLWGSNMAEMHPILWSRLTDRRLSHEHVRVAVLSTFTHRSMDLADTPIIFRPGTDLAILNYIAHHIISTGRVNRDFVDRHTNFALGATDIGYGLRPEHQLQLAAKGAADAGAMTPTDFETFAALVSEYTLEKAAEISGVEPALLEELAELYADPDRKVMSLWTMGFNQHVRGVWANHMVYNLHLLTGKISEPGNSPFSLTGQPSACGTAREVGTFAHRLPADMVVTNPEHRAHAEEIWKLPAGLLPDWVGAHAVEQDRKLHDGEINFYWVQVNNNMQAAPNIDQETYPGYRNPENFIVVSDAYPTVTGRCADLVLPAAMWVEKEGAYGNAERRTHFWHQLVEAPGEARSDLWQLMEFSKRFTTDEVWPEEILSAAPAYRGKTLFEVLFANGSVDRFPASDVNPDHANHEAALFGFYPQKGLFEEYAAFGRGHGHDLAPFDTYHEVRGLRWPVVEGEETRWRYREGFDPYVKPGEGLRFYGKPDGRAVILGVPYEPPAESPDEEFGFWLVTGRVLEHWHSGSMTLRVPELYKAFPGAVCFMHPEDARSRGLNRGSEVRVISRRGEIRTRLETRGRNRMPRGVVFVPWFDASQLINKVTLDANDPISRQTDFKKCAVKIEAV.

Positions 1-29 (MTLTRRDLIKAQAAATAAAAAGLPVSALA) form a signal peptide, tat-type signal. One can recognise a 4Fe-4S Mo/W bis-MGD-type domain in the interval 41–97 (IRWSKAPCRFCGTGCGVMVGTRDGQVVATHGDTQAEVNRGLNCVKGYFLSKIMYGED). [4Fe-4S] cluster contacts are provided by cysteine 48, cysteine 51, cysteine 55, and cysteine 83. Residues lysine 85, glutamine 152, asparagine 177, cysteine 181, 214-221 (WGSNMAEM), 245-249 (STFTH), 264-266 (GTD), methionine 375, glutamine 379, asparagine 485, 511-512 (SD), lysine 534, aspartate 561, and 721-730 (TGRVLEHWHS) each bind Mo-bis(molybdopterin guanine dinucleotide). Position 797 (tryptophan 797) interacts with substrate. The Mo-bis(molybdopterin guanine dinucleotide) site is built by asparagine 805 and lysine 822.

It belongs to the prokaryotic molybdopterin-containing oxidoreductase family. NasA/NapA/NarB subfamily. In terms of assembly, component of the periplasmic nitrate reductase NapAB complex composed of NapA and NapB. The cofactor is [4Fe-4S] cluster. Requires Mo-bis(molybdopterin guanine dinucleotide) as cofactor. In terms of processing, predicted to be exported by the Tat system. The position of the signal peptide cleavage has not been experimentally proven.

Its subcellular location is the periplasm. It carries out the reaction 2 Fe(II)-[cytochrome] + nitrate + 2 H(+) = 2 Fe(III)-[cytochrome] + nitrite + H2O. Catalytic subunit of the periplasmic nitrate reductase complex NapAB. Receives electrons from NapB and catalyzes the reduction of nitrate to nitrite. In Cereibacter sphaeroides (strain ATCC 17023 / DSM 158 / JCM 6121 / CCUG 31486 / LMG 2827 / NBRC 12203 / NCIMB 8253 / ATH 2.4.1.) (Rhodobacter sphaeroides), this protein is Periplasmic nitrate reductase.